The primary structure comprises 491 residues: UDP-N-acetylmuramate--L-alanine ligase (491 aa).

ATP is bound at residue 126–132 (GTHGKTT).

Belongs to the MurCDEF family.

Its subcellular location is the cytoplasm. The enzyme catalyses UDP-N-acetyl-alpha-D-muramate + L-alanine + ATP = UDP-N-acetyl-alpha-D-muramoyl-L-alanine + ADP + phosphate + H(+). Its pathway is cell wall biogenesis; peptidoglycan biosynthesis. In terms of biological role, cell wall formation. In Escherichia coli (strain SE11), this protein is UDP-N-acetylmuramate--L-alanine ligase.